The following is a 290-amino-acid chain: Sodium/potassium-transporting ATPase subunit beta-2 (290 aa).

The Cytoplasmic portion of the chain corresponds to 1–39 (MVIQKEKKSCGQVVEEWKEFVWNPRTHQFMGRTGTSWAF). The helical; Signal-anchor for type II membrane protein transmembrane segment at 40 to 67 (ILLFYLVFYGFLTAMFTLTMWVMLQTVS) threads the bilayer. Residues 68 to 290 (DHTPKYQDRL…VAFKLRINKT (223 aa)) lie on the Extracellular side of the membrane. N-linked (GlcNAc...) asparagine glycans are attached at residues asparagine 96 and asparagine 118. A disulfide bond links cysteine 129 and cysteine 150. Asparagine 153 and asparagine 159 each carry an N-linked (GlcNAc...) asparagine glycan. Cysteines 160 and 177 form a disulfide. N-linked (GlcNAc...) asparagine glycans are attached at residues asparagine 193, asparagine 197, and asparagine 238. The tract at residues 193–290 (NQSMNVTCAG…VAFKLRINKT (98 aa)) is immunoglobulin-like. A disulfide bridge connects residues cysteine 200 and cysteine 261.

The protein belongs to the X(+)/potassium ATPases subunit beta family. The sodium/potassium-transporting ATPase is composed of a catalytic alpha subunit, an auxiliary non-catalytic beta subunit and an additional regulatory subunit. Interacts with BSG.

Its subcellular location is the cell membrane. In terms of biological role, this is the non-catalytic component of the active enzyme, which catalyzes the hydrolysis of ATP coupled with the exchange of Na(+) and K(+) ions across the plasma membrane. The exact function of the beta-2 subunit is not known. Its function is as follows. Mediates cell adhesion of neurons and astrocytes, and promotes neurite outgrowth. The chain is Sodium/potassium-transporting ATPase subunit beta-2 (ATP1B2) from Ochotona curzoniae (Black-lipped pika).